The sequence spans 551 residues: Ubiquitin domain-containing protein DSK2b (551 aa).

Positions 18-93 (VAVNIRCSNG…IHMVRGSAPS (76 aa)) constitute a Ubiquitin-like domain. A disordered region spans residues 88–127 (RGSAPSSAPPPAPAASQTTAPSVTRGVGSDNSSNLGGASP). 2 STI1 domains span residues 143-184 (GNAM…QNLM) and 197-236 (NPQMRELVDRNPELGHVLNDPSILRQTLEAARNPELMREM). A compositionally biased stretch (polar residues) spans 294 to 319 (QGVTTQGSDASNNSSTPNAGTGTIPN). The interval 294-336 (QGVTTQGSDASNNSSTPNAGTGTIPNANPLPNPWGATGGQTTA) is disordered. 2 STI1 domains span residues 373–410 (SPLGATPDASQLSQLLQNPAISQMMQSVFSNPQYMNQL) and 414–449 (NPQLRSMLDSNPQLREMMQNPDFLRQFSSPEMMQQM). Positions 455–475 (SLSQNRNTASQDAGQTGAATG) are disordered. The segment covering 465–475 (QDAGQTGAATG) has biased composition (low complexity). Positions 504–548 (PPEERYATQLQQLQEMGFYDRAENIRALLATNGNVNAAVERLLGS) constitute a UBA domain.

Interacts with 'Lys-48'-linked polyubiquitin chains via its UBA domain. Interacts with RPN10 via its ubiquitin-like domain. Interacts with PEX2 and PEX12. Ubiquitous.

Its subcellular location is the nucleus. It localises to the cytoplasm. Its function is as follows. Binds and presumably selects ubiquitin-conjugates for destruction. Prefers multiubiquitin chains rather than single ubiquitins, with a binding affinity for 'Lys-48'-linked ubiquitin chains. Acts as a ubiquitin receptor that associates with the 26S proteasomal docking subunit RPN10 for the indirect recognition of ubiquitinated substrates of ubiquitin/26S proteasome-mediated proteolysis (UPP). This Arabidopsis thaliana (Mouse-ear cress) protein is Ubiquitin domain-containing protein DSK2b (DSK2B).